An 83-amino-acid chain; its full sequence is Mu-theraphotoxin-Hhn2k (83 aa).

An N-terminal signal peptide occupies residues 1 to 21; sequence MKASMFLALAGLVLLFVVDYA. A propeptide spanning residues 22 to 48 is cleaved from the precursor; the sequence is SESEEKEFPIELLSKIFAVDVFKGEER. 3 cysteine pairs are disulfide-bonded: C50–C65, C57–C70, and C64–C77. Residue L81 is modified to Leucine amide.

This sequence belongs to the neurotoxin 10 (Hwtx-1) family. 15 (Hntx-3) subfamily. In terms of assembly, monomer. In terms of tissue distribution, expressed by the venom gland.

Its subcellular location is the secreted. Its function is as follows. Lethal neurotoxin. Selectively blocks tetrodotoxin-sensitive voltage-gated sodium channels (Nav). Does not affect tetrodotoxin-resistant voltage-gated sodium channels or calcium channels. This Cyriopagopus hainanus (Chinese bird spider) protein is Mu-theraphotoxin-Hhn2k.